Here is a 396-residue protein sequence, read N- to C-terminus: MSLETFPPPAGYNAPEQVHITQGDHNGRGMIISWVTSLNEDGSNVVTYWIASSDGSDNKSVIATTSSYRYFDYTSGYLHHAIIKELEYKTKYFYELGTGRSTRQFNLTPPKVGPDVPYTFGVIGDLGQTYASNQTLYNYMSNPKGQAVLFAGDLSYADDHPNHDQSKWDSYGRFVEPSAAYQPWIWAAGNHEIDYAQSIGETQPFKPYKNRYHVPYRASQNKYTPQNSWLQDEFKKVNRSETPWLIVLVHAPWYNSNNYHYMEGESMRVTFEPWFVENKVDIVFAGHVHAYERSERVSNIQYNITDGMSTPVKDQNAPVYITIGDGGNIEGIANIFTDPQPSYSAFREASFGHALLEIKNRTHAHYTWHRNKEDEAVIADSIWLKNRYYLPEEETI.

An N-terminal signal peptide occupies residues Met-1 to Asn-13. Asn-58 is a glycosylation site (N-linked (GlcNAc...) asparagine). Residue Asp-125 participates in Fe cation binding. Asn-133 carries an N-linked (GlcNAc...) asparagine glycan. Residues Asp-153 and Tyr-156 each coordinate Fe cation. Asp-153 serves as a coordination point for Zn(2+). Asn-190 contacts Zn(2+). Asn-190 is a binding site for substrate. Asn-238 carries N-linked (GlcNAc...) asparagine glycosylation. His-250 serves as a coordination point for Zn(2+). Catalysis depends on His-260, which acts as the Proton donor. His-287 is a binding site for Zn(2+). His-287–His-289 lines the substrate pocket. His-289 contributes to the Fe cation binding site. Residues Asn-303 and Asn-360 are each glycosylated (N-linked (GlcNAc...) asparagine).

It belongs to the metallophosphoesterase superfamily. Purple acid phosphatase family. Homodimer. Requires Fe cation as cofactor. The cofactor is Zn(2+).

The protein resides in the secreted. It catalyses the reaction a phosphate monoester + H2O = an alcohol + phosphate. The protein is Purple acid phosphatase 5 (PAP5) of Arabidopsis thaliana (Mouse-ear cress).